Consider the following 206-residue polypeptide: FMN-dependent NADH:quinone oxidoreductase (206 aa).

Residues S10, 16 to 18 (SSS), 93 to 96 (MYNF), and 137 to 140 (TRGG) contribute to the FMN site.

It belongs to the azoreductase type 1 family. Homodimer. It depends on FMN as a cofactor.

It carries out the reaction 2 a quinone + NADH + H(+) = 2 a 1,4-benzosemiquinone + NAD(+). The enzyme catalyses N,N-dimethyl-1,4-phenylenediamine + anthranilate + 2 NAD(+) = 2-(4-dimethylaminophenyl)diazenylbenzoate + 2 NADH + 2 H(+). Quinone reductase that provides resistance to thiol-specific stress caused by electrophilic quinones. In terms of biological role, also exhibits azoreductase activity. Catalyzes the reductive cleavage of the azo bond in aromatic azo compounds to the corresponding amines. This chain is FMN-dependent NADH:quinone oxidoreductase, found in Psychromonas ingrahamii (strain DSM 17664 / CCUG 51855 / 37).